We begin with the raw amino-acid sequence, 384 residues long: tRNA-specific 2-thiouridylase MnmA (384 aa).

ATP contacts are provided by residues 13–20 (GLSGGVDS) and M39. The tract at residues 99–101 (NPD) is interaction with target base in tRNA. The Nucleophile role is filled by C104. C104 and C215 are disulfide-bonded. ATP is bound at residue G128. The interaction with tRNA stretch occupies residues 165–167 (KDQ). Residue C215 is the Cysteine persulfide intermediate of the active site. Residues 333 to 334 (RY) form an interaction with tRNA region.

This sequence belongs to the MnmA/TRMU family.

The protein resides in the cytoplasm. It catalyses the reaction S-sulfanyl-L-cysteinyl-[protein] + uridine(34) in tRNA + AH2 + ATP = 2-thiouridine(34) in tRNA + L-cysteinyl-[protein] + A + AMP + diphosphate + H(+). Its function is as follows. Catalyzes the 2-thiolation of uridine at the wobble position (U34) of tRNA, leading to the formation of s(2)U34. The sequence is that of tRNA-specific 2-thiouridylase MnmA from Albidiferax ferrireducens (strain ATCC BAA-621 / DSM 15236 / T118) (Rhodoferax ferrireducens).